A 134-amino-acid chain; its full sequence is MRQTVKEIVAIGIGGAIGTSFRFLLNTWTLTTGYPYGTLIENIVGSFLLGFLTSWFLVIVPKEWLKKGLGVGLCGGFTTMSTLAADSVLLYSHHPFSSLIYVAASLFGGIGFALLGYLLASKIATRRKREVAGS.

4 helical membrane passes run isoleucine 8–tryptophan 28, isoleucine 40–valine 60, leucine 69–leucine 89, and leucine 99–leucine 119. Residues glycine 75 and threonine 78 each contribute to the Na(+) site.

This sequence belongs to the fluoride channel Fluc/FEX (TC 1.A.43) family.

It is found in the cell membrane. It catalyses the reaction fluoride(in) = fluoride(out). With respect to regulation, na(+) is not transported, but it plays an essential structural role and its presence is essential for fluoride channel function. Functionally, fluoride-specific ion channel. Important for reducing fluoride concentration in the cell, thus reducing its toxicity. This is Fluoride-specific ion channel FluC 2 from Halalkalibacterium halodurans (strain ATCC BAA-125 / DSM 18197 / FERM 7344 / JCM 9153 / C-125) (Bacillus halodurans).